Consider the following 501-residue polypeptide: Aspartate--tRNA ligase, cytoplasmic (501 aa).

Thr52 carries the post-translational modification Phosphothreonine. At Lys74 the chain carries N6-acetyllysine. Glu229 contributes to the L-aspartate binding site. Ser249 carries the post-translational modification Phosphoserine. Residues 251 to 254 (QLYK) are aspartate. Residue Arg273 participates in L-aspartate binding. ATP-binding positions include 273-275 (RAE) and 281-283 (RHL). Position 374 is an N6-acetyllysine (Lys374). Residue Glu424 coordinates ATP. L-aspartate-binding residues include Ser427 and Arg431. 472–475 (GLER) is a binding site for ATP.

This sequence belongs to the class-II aminoacyl-tRNA synthetase family. Type 2 subfamily. In terms of assembly, homodimer. Part of a multisubunit complex that groups tRNA ligases for Arg (RARS1), Asp (DARS1), Gln (QARS1), Ile (IARS1), Leu (LARS1), Lys (KARS1), Met (MARS1) the bifunctional ligase for Glu and Pro (EPRS1) and the auxiliary subunits AIMP1/p43, AIMP2/p38 and EEF1E1/p18.

The protein localises to the cytoplasm. The enzyme catalyses tRNA(Asp) + L-aspartate + ATP = L-aspartyl-tRNA(Asp) + AMP + diphosphate. Its function is as follows. Catalyzes the specific attachment of an amino acid to its cognate tRNA in a 2 step reaction: the amino acid (AA) is first activated by ATP to form AA-AMP and then transferred to the acceptor end of the tRNA. This Mus musculus (Mouse) protein is Aspartate--tRNA ligase, cytoplasmic (Dars1).